The following is a 33-amino-acid chain: Antimicrobial peptide MBP-1 (33 aa).

As to expression, predominantly in the embryo portion of the kernel.

It is found in the secreted. Its function is as follows. Inhibitor of both bacterial and fungal growth in vitro. This chain is Antimicrobial peptide MBP-1, found in Zea mays (Maize).